The primary structure comprises 155 residues: Basic phospholipase A2 PC9 (155 aa).

Positions 1–21 (MYPAHLLVLLAVCVSLLGASA) are cleaved as a signal peptide. The propeptide occupies 22 to 27 (ISPRPL). 7 disulfide bridges follow: C38/C98, C54/C144, C56/C72, C71/C125, C78/C118, C87/C111, and C105/C116. The Ca(2+) site is built by Y55, G57, and G59. H75 is an active-site residue. D76 lines the Ca(2+) pocket. D119 is a catalytic residue.

This sequence belongs to the phospholipase A2 family. Group I subfamily. D49 sub-subfamily. The cofactor is Ca(2+). As to expression, expressed by the venom gland.

The protein resides in the secreted. The catalysed reaction is a 1,2-diacyl-sn-glycero-3-phosphocholine + H2O = a 1-acyl-sn-glycero-3-phosphocholine + a fatty acid + H(+). Snake venom phospholipase A2 (PLA2) that inhibits neuromuscular transmission by blocking acetylcholine release from the nerve termini. PLA2 catalyzes the calcium-dependent hydrolysis of the 2-acyl groups in 3-sn-phosphoglycerides. The chain is Basic phospholipase A2 PC9 from Laticauda colubrina (Yellow-lipped sea krait).